Here is a 47-residue protein sequence, read N- to C-terminus: MYYAVVLVILAVVAGIAGFRGIAGLSFRVAKFLIVIFLVLALVTFLL.

Transmembrane regions (helical) follow at residues 5 to 25 (VVLV…IAGL) and 27 to 47 (FRVA…TFLL).

This sequence belongs to the UPF0391 family.

Its subcellular location is the cell membrane. The polypeptide is UPF0391 membrane protein rrnAC2507 (Haloarcula marismortui (strain ATCC 43049 / DSM 3752 / JCM 8966 / VKM B-1809) (Halobacterium marismortui)).